We begin with the raw amino-acid sequence, 134 residues long: Phosphoribosyl-AMP cyclohydrolase (134 aa).

Asp-80 contributes to the Mg(2+) binding site. Cys-81 contacts Zn(2+). Residues Asp-82 and Asp-84 each coordinate Mg(2+). Residues Cys-98 and Cys-105 each coordinate Zn(2+).

The protein belongs to the PRA-CH family. Homodimer. Mg(2+) serves as cofactor. Requires Zn(2+) as cofactor.

Its subcellular location is the cytoplasm. It carries out the reaction 1-(5-phospho-beta-D-ribosyl)-5'-AMP + H2O = 1-(5-phospho-beta-D-ribosyl)-5-[(5-phospho-beta-D-ribosylamino)methylideneamino]imidazole-4-carboxamide. It participates in amino-acid biosynthesis; L-histidine biosynthesis; L-histidine from 5-phospho-alpha-D-ribose 1-diphosphate: step 3/9. Its function is as follows. Catalyzes the hydrolysis of the adenine ring of phosphoribosyl-AMP. The sequence is that of Phosphoribosyl-AMP cyclohydrolase from Bordetella petrii (strain ATCC BAA-461 / DSM 12804 / CCUG 43448).